The primary structure comprises 92 residues: Small ribosomal subunit protein uS19 (92 aa).

It belongs to the universal ribosomal protein uS19 family.

In terms of biological role, protein S19 forms a complex with S13 that binds strongly to the 16S ribosomal RNA. In Novosphingobium aromaticivorans (strain ATCC 700278 / DSM 12444 / CCUG 56034 / CIP 105152 / NBRC 16084 / F199), this protein is Small ribosomal subunit protein uS19.